Consider the following 101-residue polypeptide: Small ribosomal subunit protein uS14 (101 aa).

Residues 52-72 are disordered; the sequence is PRDSSPVRQRRRCRSTGRPRG. The segment covering 59 to 72 has biased composition (basic residues); the sequence is RQRRRCRSTGRPRG.

This sequence belongs to the universal ribosomal protein uS14 family. As to quaternary structure, part of the 30S ribosomal subunit. Contacts proteins S3 and S10.

In terms of biological role, binds 16S rRNA, required for the assembly of 30S particles and may also be responsible for determining the conformation of the 16S rRNA at the A site. The polypeptide is Small ribosomal subunit protein uS14 (Nitrosococcus oceani (strain ATCC 19707 / BCRC 17464 / JCM 30415 / NCIMB 11848 / C-107)).